Consider the following 616-residue polypeptide: Pentatricopeptide repeat-containing protein At4g15720 (616 aa).

10 PPR repeats span residues Asp-63–Pro-93, Asn-94–Pro-128, Asn-130–Arg-164, Asn-165–Val-199, Val-200–Ala-228, Asn-235–Ser-269, Asn-270–His-300, Ser-301–Pro-335, Asn-336–Pro-371, and Asp-372–Gly-402. The interval Leu-409–Lys-484 is type E motif. Positions Asp-485–Lys-515 are type E(+) motif. The tract at residues Ser-522–Trp-616 is type DYW motif.

This sequence belongs to the PPR family. PCMP-H subfamily.

The chain is Pentatricopeptide repeat-containing protein At4g15720 (PCMP-H1) from Arabidopsis thaliana (Mouse-ear cress).